An 88-amino-acid chain; its full sequence is RNA-binding protein Hfq (88 aa).

The Sm domain maps to 9 to 68 (DPFLNALRRERIPVSIYLVNGIKLQGQIESFDQFVILLKNTVNQMVYKHAISTVVPARAV). Residues 66 to 88 (RAVSHHSGEQQRAPSDRPEKTED) form a disordered region. Basic and acidic residues predominate over residues 71–88 (HSGEQQRAPSDRPEKTED).

Belongs to the Hfq family. As to quaternary structure, homohexamer.

Functionally, RNA chaperone that binds small regulatory RNA (sRNAs) and mRNAs to facilitate mRNA translational regulation in response to envelope stress, environmental stress and changes in metabolite concentrations. Also binds with high specificity to tRNAs. This is RNA-binding protein Hfq from Vibrio atlanticus (strain LGP32) (Vibrio splendidus (strain Mel32)).